The sequence spans 101 residues: NADH-quinone oxidoreductase subunit K (101 aa).

3 helical membrane-spanning segments follow: residues 4 to 24, 30 to 50, and 61 to 81; these read LAHF…GIFL, IVLL…FVAF, and VFVF…LAIL.

It belongs to the complex I subunit 4L family. In terms of assembly, NDH-1 is composed of 14 different subunits. Subunits NuoA, H, J, K, L, M, N constitute the membrane sector of the complex.

It is found in the cell inner membrane. It catalyses the reaction a quinone + NADH + 5 H(+)(in) = a quinol + NAD(+) + 4 H(+)(out). Its function is as follows. NDH-1 shuttles electrons from NADH, via FMN and iron-sulfur (Fe-S) centers, to quinones in the respiratory chain. The immediate electron acceptor for the enzyme in this species is believed to be ubiquinone. Couples the redox reaction to proton translocation (for every two electrons transferred, four hydrogen ions are translocated across the cytoplasmic membrane), and thus conserves the redox energy in a proton gradient. The protein is NADH-quinone oxidoreductase subunit K of Cupriavidus pinatubonensis (strain JMP 134 / LMG 1197) (Cupriavidus necator (strain JMP 134)).